A 200-amino-acid polypeptide reads, in one-letter code: Holliday junction branch migration complex subunit RuvA (200 aa).

Residues 1-63 (MIAFVRGQVA…EDSLTLFGFA (63 aa)) form a domain I region. Positions 64–142 (DEDEKQTFEL…APTGAGRSAG (79 aa)) are domain II. The segment at 142–146 (GVPAP) is flexible linker. Positions 147-200 (AGAVWRDQVHQGLVGLGWPVRDAEKAVAAVAPEAGDVPDVAALLRAALRTLSKA) are domain III.

It belongs to the RuvA family. In terms of assembly, homotetramer. Forms an RuvA(8)-RuvB(12)-Holliday junction (HJ) complex. HJ DNA is sandwiched between 2 RuvA tetramers; dsDNA enters through RuvA and exits via RuvB. An RuvB hexamer assembles on each DNA strand where it exits the tetramer. Each RuvB hexamer is contacted by two RuvA subunits (via domain III) on 2 adjacent RuvB subunits; this complex drives branch migration. In the full resolvosome a probable DNA-RuvA(4)-RuvB(12)-RuvC(2) complex forms which resolves the HJ.

The protein resides in the cytoplasm. Its function is as follows. The RuvA-RuvB-RuvC complex processes Holliday junction (HJ) DNA during genetic recombination and DNA repair, while the RuvA-RuvB complex plays an important role in the rescue of blocked DNA replication forks via replication fork reversal (RFR). RuvA specifically binds to HJ cruciform DNA, conferring on it an open structure. The RuvB hexamer acts as an ATP-dependent pump, pulling dsDNA into and through the RuvAB complex. HJ branch migration allows RuvC to scan DNA until it finds its consensus sequence, where it cleaves and resolves the cruciform DNA. The protein is Holliday junction branch migration complex subunit RuvA of Nocardioides sp. (strain ATCC BAA-499 / JS614).